The sequence spans 192 residues: MEYRSLTLDDFLSRFQLLRPQINRETLNHRQAAVLIPIVRRPQPGLLLTQRSIHLRKHAGQVAFPGGAVDDTDASVIAAALREAEEEVAIPPSTVEVIGVLPPVDSVTGYQVTPVVGIIPPDLPYRASEDEVSAVFEMPLAQALHLGRYHPLDIYRRGDSHRVWLSWYEQYFVWGMTAGIIRELALQIGVKP.

In terms of domain architecture, Nudix hydrolase spans 29 to 160 (HRQAAVLIPI…PLDIYRRGDS (132 aa)). Residues 67-89 (GAVDDTDASVIAAALREAEEEVA) carry the Nudix box motif. Mg(2+)-binding residues include Glu-83 and Glu-87.

Belongs to the Nudix hydrolase family. PCD1 subfamily. It depends on Mn(2+) as a cofactor. Mg(2+) is required as a cofactor.

In terms of biological role, probably mediates the hydrolysis of some nucleoside diphosphate derivatives. This is an uncharacterized protein from Escherichia coli (strain SMS-3-5 / SECEC).